The chain runs to 1017 residues: Voltage-gated delayed rectifier potassium channel KCNH4 (1017 aa).

Residues 1-232 (MPVMKGLLAP…YSIPKAVWDG (232 aa)) are Cytoplasmic-facing. Residues 14–90 (FLDTIATRFD…QRLQKALEGH (77 aa)) form the PAS domain. In terms of domain architecture, PAC spans 93–145 (HRAEICFYRKDGSAFWCLLDMMPIKNELGEVVLFLFSFKDISQSGGPGLGSPG). Positions 139–170 (PGLGSPGIHGDNNNHENSLGRRGASSRLRSTR) are disordered. A helical transmembrane segment spans residues 233-253 (LILLATFYVAVTVPYNVCFAG). Over 254-262 (DDDTPITSR) the chain is Extracellular. Residues 263–283 (HTLVSDIAVEMLFILDIILNF) traverse the membrane as a helical segment. Over 284-305 (RTTYVSQSGQVVSAPRSIGLHY) the chain is Cytoplasmic. A helical transmembrane segment spans residues 306 to 326 (LATWFFVDLIAALPFDLLYVF). The Extracellular portion of the chain corresponds to 327–334 (NITVTSLV). A helical; Voltage-sensor membrane pass occupies residues 335–355 (HLLKTVRLLRLLRLLQKLERY). At 356–364 (SQCSAVVLT) the chain is on the cytoplasmic side. The helical transmembrane segment at 365 to 385 (LLMSVFALLAHWMACVWYVIG) threads the bilayer. Residues 386 to 427 (RREMEANDPLLWDIGWLHELGKRLEEPYVNGSAGGPSRRSAY) are Extracellular-facing. N-linked (GlcNAc...) asparagine glycosylation occurs at N415. Positions 428–448 (IAALYFTLSSLTSVGFGNVCA) form an intramembrane region, pore-forming. The Selectivity filter signature appears at 440–445 (SVGFGN). Residues 449-454 (NTDAEK) lie on the Extracellular side of the membrane. Residues 455-475 (IFSICTMLIGALMHAVVFGNV) traverse the membrane as a helical segment. Residues 476-1017 (TAIIQRMYSR…SFQSGSDTFH (542 aa)) lie on the Cytoplasmic side of the membrane. The segment at 557–621 (LFGAASRGCL…AILGKGDLIG (65 aa)) is cNMP-binding domain. 2 disordered regions span residues 690-749 (GSEN…PNLS) and 771-870 (LVSS…ELAT). The span at 703–726 (PRLSQARSDTLGSSSDKTLPSITE) shows a compositional bias: polar residues. Composition is skewed to low complexity over residues 771–786 (LVSS…PALA) and 806–820 (PPQL…FGPP). The stretch at 873 to 907 (AEEVKEKVCRLNQEISRLNQEVSQLSRELRQVMGL) forms a coiled coil. A disordered region spans residues 972 to 1017 (SELRSSMVPPFPSEPDPLGPSPVPEASPLTPSLLKHSFQSGSDTFH). The span at 980 to 996 (PPFPSEPDPLGPSPVPE) shows a compositional bias: pro residues. Residues 1008–1017 (SFQSGSDTFH) show a composition bias toward polar residues.

It belongs to the potassium channel family. H (Eag) (TC 1.A.1.20) subfamily. Kv12.3/KCNH4 sub-subfamily. As to quaternary structure, the potassium channel is probably composed of a homo- or heterotetrameric complex of pore-forming alpha subunits that can associate with modulating beta subunits. Highly expressed in adult testis, and in adult and embryonic brain. In adult brain found in piriform cortex, olfactory tubercle, cerebral cortex, hippocampus pyramidial cells and dentate gyrus and basal ganglia of caudate/putamen and accumbens nucleus. Detected at intermediate levels in lung, spinal cord, and pituitary.

It localises to the membrane. The catalysed reaction is K(+)(in) = K(+)(out). In terms of biological role, pore-forming (alpha) subunit of a voltage-gated delayed rectifier. Activates at more negative voltages, exhibits fast prepulse-independent activation kinetics and deactivates much more slowly, but shows no inactivation. The polypeptide is Voltage-gated delayed rectifier potassium channel KCNH4 (Rattus norvegicus (Rat)).